A 203-amino-acid chain; its full sequence is Small ribosomal subunit protein uS4 (203 aa).

In terms of domain architecture, S4 RNA-binding spans 92–164; sequence TRLDSVVYLL…LEENRIRNVP (73 aa).

Belongs to the universal ribosomal protein uS4 family. As to quaternary structure, part of the 30S ribosomal subunit. Contacts protein S5. The interaction surface between S4 and S5 is involved in control of translational fidelity.

One of the primary rRNA binding proteins, it binds directly to 16S rRNA where it nucleates assembly of the body of the 30S subunit. Functionally, with S5 and S12 plays an important role in translational accuracy. In Opitutus terrae (strain DSM 11246 / JCM 15787 / PB90-1), this protein is Small ribosomal subunit protein uS4.